The following is a 101-amino-acid chain: ATP-dependent Clp protease adapter protein ClpS (101 aa).

It belongs to the ClpS family. As to quaternary structure, binds to the N-terminal domain of the chaperone ClpA.

Its function is as follows. Involved in the modulation of the specificity of the ClpAP-mediated ATP-dependent protein degradation. This is ATP-dependent Clp protease adapter protein ClpS from Clostridium acetobutylicum (strain ATCC 824 / DSM 792 / JCM 1419 / IAM 19013 / LMG 5710 / NBRC 13948 / NRRL B-527 / VKM B-1787 / 2291 / W).